The sequence spans 625 residues: MAU2 chromatid cohesion factor homolog (625 aa).

3 TPR repeats span residues 96–129 (FDTA…SQNN), 451–484 (GGFY…ANAE), and 491–524 (SCSL…ASKI). Polar residues predominate over residues 600-611 (TVPTTETSTSAL). The disordered stretch occupies residues 600–625 (TVPTTETSTSALQQPQQPAAQFGQFY). The segment covering 612 to 625 (QQPQQPAAQFGQFY) has biased composition (low complexity).

It belongs to the SCC4/mau-2 family. Interacts with Nipped-B to form the cohesin loading complex.

The protein resides in the nucleus. The protein localises to the nucleoplasm. Its function is as follows. Required for association of the cohesin complex with chromatin during interphase. Plays a role in sister chromatid cohesion and normal progression through prometaphase. This chain is MAU2 chromatid cohesion factor homolog, found in Drosophila mojavensis (Fruit fly).